Here is a 165-residue protein sequence, read N- to C-terminus: Nucleotide-binding protein Syncc9605_0652 (165 aa).

It belongs to the YajQ family.

In terms of biological role, nucleotide-binding protein. The chain is Nucleotide-binding protein Syncc9605_0652 from Synechococcus sp. (strain CC9605).